The following is a 570-amino-acid chain: High-affinity hexose transporter HXT6 (570 aa).

The Cytoplasmic portion of the chain corresponds to 1–60 (MSQDAAIAEQTPVEHLSAVDSASHSVLSTPSNKAERDEIKAYGEGEEHEPVVEIPKRPAS). A helical transmembrane segment spans residues 61–81 (AYVTVSIMCIMIAFGGFVFGW). Topologically, residues 82–116 (DTGTISGFINQTDFIRRFGMKHKDGTNYLSKVRTG) are extracellular. Asparagine 91 carries N-linked (GlcNAc...) asparagine glycosylation. Residues 117–137 (LIVSIFNIGCAIGGIILSKLG) form a helical membrane-spanning segment. At 138 to 143 (DMYGRK) the chain is on the cytoplasmic side. A helical transmembrane segment spans residues 144–164 (VGLIVVVVIYIIGIIIQIASI). Residues 165–174 (NKWYQYFIGR) lie on the Extracellular side of the membrane. Residues 175–195 (IISGLGVGGIAVLSPMLISEV) traverse the membrane as a helical segment. Residues 196 to 201 (SPKHLR) are Cytoplasmic-facing. Residues 202–222 (GTLVSCYQLMITAGIFLGYCT) traverse the membrane as a helical segment. The Extracellular portion of the chain corresponds to 223–236 (NFGTKNYSNSVQWR). The N-linked (GlcNAc...) asparagine glycan is linked to asparagine 228. A helical membrane pass occupies residues 237–257 (VPLGLCFAWALFMIGGMTFVP). At 258–340 (ESPRYLAEVG…IQSLQQLTGD (83 aa)) the chain is on the cytoplasmic side. Residues 341 to 357 (NYFFYYGTTIFKAVGLS) form a helical membrane-spanning segment. Residues 358 to 363 (DSFETS) lie on the Extracellular side of the membrane. The helical transmembrane segment at 364 to 381 (IVLGIVNFASTFVGIYVV) threads the bilayer. Residues 382 to 388 (ERYGRRT) lie on the Cytoplasmic side of the membrane. The helical transmembrane segment at 389 to 409 (CLLWGAASMTACMVVYASVGV) threads the bilayer. The Extracellular segment spans residues 410-431 (TRLWPNGQDQPSSKGAGNCMIV). A helical transmembrane segment spans residues 432 to 452 (FACFYIFCFATTWAPIPYVVV). The Cytoplasmic portion of the chain corresponds to 453–469 (SETFPLRVKSKAMSIAT). A helical transmembrane segment spans residues 470–490 (AANWLWGFLIGFFTPFITGAI). A topological domain (extracellular) is located at residue asparagine 491. The chain crosses the membrane as a helical span at residues 492 to 512 (FYYGYVFMGCLVFMFFYVLLV). Residues 513–570 (VPETKGLTLEEVNTMWEEGVLPWKSASWVPPSRRGANYDAEEMAHDDKPLYKRMFSTK) are Cytoplasmic-facing. Residue lysine 560 forms a Glycyl lysine isopeptide (Lys-Gly) (interchain with G-Cter in ubiquitin) linkage.

This sequence belongs to the major facilitator superfamily. Sugar transporter (TC 2.A.1.1) family.

The protein resides in the membrane. Functionally, high-affinity glucose transporter. The protein is High-affinity hexose transporter HXT6 (HXT6) of Saccharomyces cerevisiae (strain ATCC 204508 / S288c) (Baker's yeast).